A 660-amino-acid chain; its full sequence is Secretin PulD (660 aa).

The signal sequence occupies residues 1–27; the sequence is MIIANVIRSFSLTLLIFAALLFRPAAA. Residues 28–124 form an N0 region; sequence EEFSASFKGT…VASDAAPGIG (97 aa). The interval 126–190 is N1; the sequence is EVVTRVVPLT…TIVERVDNAG (65 aa). An N2 region spans residues 191–264; sequence DRSVVTVPLS…MIKQLDRQQA (74 aa). The interval 267 to 341 is N3; it reads GNTKVIYLKY…DLERVIAQLD (75 aa). Residues 346–596 are secretin; the sequence is QVLVEAIIAE…LFIRPTVIRD (251 aa). A s domain region spans residues 598 to 660; sequence DEYRQASSGQ…IDAFNLGGNL (63 aa).

This sequence belongs to the bacterial secretin family. GSP D subfamily. In terms of assembly, forms a cylindrical channel with 15 subunits.

It localises to the cell outer membrane. Its function is as follows. Involved in a type II secretion system (T2SS, formerly general secretion pathway, GSP) for the export of proteins. Required for the translocation of pullulanase. This subunit forms the outer membrane channel. In Klebsiella pneumoniae, this protein is Secretin PulD (pulD).